We begin with the raw amino-acid sequence, 161 residues long: 4-hydroxybenzoyl-CoA reductase subunit gamma (161 aa).

One can recognise a 2Fe-2S ferredoxin-type domain in the interval 3 to 79; that stretch reads NILRLTLNGR…GKKVETVESL (77 aa). 8 residues coordinate [2Fe-2S] cluster: cysteine 41, cysteine 46, cysteine 49, cysteine 61, cysteine 100, cysteine 103, cysteine 135, and cysteine 137.

As to quaternary structure, heterohexamer of two alpha, two beta and two gamma subunits. It depends on [2Fe-2S] cluster as a cofactor.

The catalysed reaction is oxidized 2[4Fe-4S]-[ferredoxin] + benzoyl-CoA + H2O = 4-hydroxybenzoyl-CoA + reduced 2[4Fe-4S]-[ferredoxin] + 2 H(+). Its activity is regulated as follows. Inactivated by low concentrations of cyanide in vitro. Component of a complex that catalyzes the reductive dehydroxylation of 4-hydroxybenzoyl-CoA to benzoyl-CoA. Reaction is not reversible. Is a key enzyme in the anaerobic degradation of phenolic compounds. This chain is 4-hydroxybenzoyl-CoA reductase subunit gamma (hcrC), found in Thauera aromatica.